Reading from the N-terminus, the 401-residue chain is Histone acetyltransferase type B subunit 2 (401 aa).

5 WD repeats span residues 116-147 (EHEE…FLYS), 158-189 (FHKD…ALWE), 206-237 (LHSD…KIND), 249-280 (KCPQ…YLYD), and 293-324 (GHED…MMWD). The tract at residues 335–339 (DDAED) is interaction with the histone H4 N-terminus. The stretch at 350–381 (GHRSSVNDFDLNPQIPWLVASAEEENILQVWK) is one WD 6 repeat.

The protein belongs to the WD repeat RBAP46/RBAP48/MSI1 family. In terms of assembly, component of the HAT-B complex composed of at least HAT1 and HAT2. In the cytoplasm, this complex binds to the histone H4 tail. In the nucleus, the HAT-B complex has an additional component, the histone H3/H4 chaperone HIF1.

It is found in the cytoplasm. The protein localises to the nucleus. In terms of biological role, regulatory subunit of the histone acetylase B (HAT-B) complex. The complex acetylates 'Lys-12' of histone H4 which is required for telomeric silencing. HAT2 is required for high affinity binding of the acetyltransferase to histone H4, for the nuclear location of HAT1 and for the HAT1-HIF1 interaction. Alone, it is unable to bind to H4, requiring HAT1 for high affinity interaction with the histone tail. HAT2 also has a HAT1 independent function in life-span regulation. This Saccharomyces cerevisiae (strain ATCC 204508 / S288c) (Baker's yeast) protein is Histone acetyltransferase type B subunit 2 (HAT2).